We begin with the raw amino-acid sequence, 307 residues long: Protoheme IX farnesyltransferase (307 aa).

The next 9 membrane-spanning stretches (helical) occupy residues 31 to 51 (VMSL…YSVH), 52 to 72 (PFIA…AGAI), 102 to 119 (ALSF…FMAL), 123 to 145 (LLAS…IWLK), 151 to 171 (NIVI…AAVS), 179 to 199 (VILF…LALF), 225 to 245 (ILIY…IGMS), 247 to 267 (FIYL…AGSL), and 281 to 301 (FVYS…TNTI).

The protein belongs to the UbiA prenyltransferase family. Protoheme IX farnesyltransferase subfamily.

Its subcellular location is the cell inner membrane. It catalyses the reaction heme b + (2E,6E)-farnesyl diphosphate + H2O = Fe(II)-heme o + diphosphate. The protein operates within porphyrin-containing compound metabolism; heme O biosynthesis; heme O from protoheme: step 1/1. Converts heme B (protoheme IX) to heme O by substitution of the vinyl group on carbon 2 of heme B porphyrin ring with a hydroxyethyl farnesyl side group. The polypeptide is Protoheme IX farnesyltransferase (Rickettsia canadensis (strain McKiel)).